The chain runs to 139 residues: Hydrogenase maturation factor HypA (139 aa).

His2 is a binding site for Ni(2+). Cys73, Cys76, Cys110, and Cys113 together coordinate Zn(2+).

The protein belongs to the HypA/HybF family.

In terms of biological role, involved in the maturation of [NiFe] hydrogenases. Required for nickel insertion into the metal center of the hydrogenase. This chain is Hydrogenase maturation factor HypA, found in Pyrococcus furiosus (strain ATCC 43587 / DSM 3638 / JCM 8422 / Vc1).